Reading from the N-terminus, the 96-residue chain is Large ribosomal subunit protein bL27 (96 aa).

A propeptide spanning residues 1–9 (MLRLDLQFF) is cleaved from the precursor. The interval 14-36 (GVGSTKNGRDSQSKRLGAKRADG) is disordered.

It belongs to the bacterial ribosomal protein bL27 family. Post-translationally, the N-terminus is cleaved by ribosomal processing cysteine protease Prp.

This is Large ribosomal subunit protein bL27 from Bacillus anthracis (strain A0248).